Consider the following 466-residue polypeptide: Asparagine--tRNA ligase (466 aa).

Belongs to the class-II aminoacyl-tRNA synthetase family. Homodimer.

Its subcellular location is the cytoplasm. It carries out the reaction tRNA(Asn) + L-asparagine + ATP = L-asparaginyl-tRNA(Asn) + AMP + diphosphate + H(+). The protein is Asparagine--tRNA ligase of Myxococcus xanthus (strain DK1622).